Reading from the N-terminus, the 311-residue chain is Mediator of RNA polymerase II transcription subunit 27 (311 aa).

This sequence belongs to the Mediator complex subunit 27 family. Component of the Mediator complex.

Its subcellular location is the nucleus. In terms of biological role, component of the Mediator complex, a coactivator involved in the regulated transcription of nearly all RNA polymerase II-dependent genes. Mediator functions as a bridge to convey information from gene-specific regulatory proteins to the basal RNA polymerase II transcription machinery. Mediator is recruited to promoters by direct interactions with regulatory proteins and serves as a scaffold for the assembly of a functional preinitiation complex with RNA polymerase II and the general transcription factors. Required for the development of dopaminergic amacrine cells in the retina. May also negatively regulate the development of rod photoreceptor cells. This is Mediator of RNA polymerase II transcription subunit 27 (med27) from Danio rerio (Zebrafish).